Consider the following 335-residue polypeptide: Cell division protein ZipA (335 aa).

Residues 1-4 (MDLN) are Periplasmic-facing. Residues 5–25 (AILIILGVIALIILVAHGIWS) traverse the membrane as a helical segment. Over 26 to 335 (NRCEKSQYFE…AERDYLARVS (310 aa)) the chain is Cytoplasmic.

Belongs to the ZipA family. Interacts with FtsZ via their C-terminal domains.

It is found in the cell inner membrane. In terms of biological role, essential cell division protein that stabilizes the FtsZ protofilaments by cross-linking them and that serves as a cytoplasmic membrane anchor for the Z ring. Also required for the recruitment to the septal ring of downstream cell division proteins. This Histophilus somni (strain 129Pt) (Haemophilus somnus) protein is Cell division protein ZipA.